Consider the following 285-residue polypeptide: Small ribosomal subunit biogenesis GTPase RsgA (285 aa).

A CP-type G domain is found at 61-215 (KNQLIRPKVA…IIDSPGFSSF (155 aa)). GTP-binding positions include 110 to 113 (TKID) and 159 to 167 (GQTGVGKTS). Residues Cys-239, Cys-244, His-246, and Cys-254 each contribute to the Zn(2+) site.

This sequence belongs to the TRAFAC class YlqF/YawG GTPase family. RsgA subfamily. As to quaternary structure, monomer. Associates with 30S ribosomal subunit, binds 16S rRNA. The cofactor is Zn(2+).

It localises to the cytoplasm. Functionally, one of several proteins that assist in the late maturation steps of the functional core of the 30S ribosomal subunit. Helps release RbfA from mature subunits. May play a role in the assembly of ribosomal proteins into the subunit. Circularly permuted GTPase that catalyzes slow GTP hydrolysis, GTPase activity is stimulated by the 30S ribosomal subunit. This is Small ribosomal subunit biogenesis GTPase RsgA from Mesomycoplasma hyopneumoniae (strain 7448) (Mycoplasma hyopneumoniae).